Consider the following 505-residue polypeptide: Kinesin light chain 3 (505 aa).

Positions 1–20 (MSVQVAAPGGLGLGLERPSP) are disordered. A coiled-coil region spans residues 88–150 (LLALSAHVGA…EEEKSHLEFL (63 aa)). The disordered stretch occupies residues 157 to 193 (DPPAESQQPESPPRRDSLASLFPSEEEERRGPEAVGA). Residue Ser-173 is modified to Phosphoserine. 5 TPR repeats span residues 207–240 (LRTLHNLVIQYAGQGRYEVAVPLCRQALEDLERS), 249–282 (ATMLNILALVYRDQNKYKEATDLLHDALQIREQT), 291–324 (AATLNNLAVLYGKRGRYREAEPLCQRALEIREKV), 333–366 (AKQLNNLALLCQNQGKFEEVERHYARALSIYEAL), and 375–408 (AKTKNNLASAYLKQNKYQQAEELYKEILHREALP). The interval 409–505 (APLGAPNTGT…STSTQDLGPR (97 aa)) is disordered. Positions 416-434 (TGTTSDTQQQTLSRSSSFS) are enriched in low complexity. Residues 435 to 453 (KLRESIRRGSEKLVSRLRG) show a composition bias toward basic and acidic residues. At Ser-467 the chain carries Phosphoserine. Residues 489-505 (SEASRTLSTSTQDLGPR) show a composition bias toward polar residues. The residue at position 499 (Thr-499) is a Phosphothreonine.

Belongs to the kinesin light chain family. In terms of assembly, oligomer composed of two heavy chains and two light chains. Associates with microtubulin in an ATP-dependent manner. Interacts with KIF5C. Interacts with ODF1. Interacts with LRGUK. Interacts with VDAC2.

Its subcellular location is the cytoplasm. It localises to the cytoskeleton. It is found in the mitochondrion. In terms of biological role, kinesin is a microtubule-associated force-producing protein that may play a role in organelle transport. Plays a role during spermiogenesis in the development of the sperm tail midpiece and in the normal function of spermatozoa. May play a role in the formation of the mitochondrial sheath formation in the developing spermatid midpiece. The polypeptide is Kinesin light chain 3 (KLC3) (Bos taurus (Bovine)).